The sequence spans 614 residues: Threonine--tRNA ligase (614 aa).

The segment at 1 to 138 (MRTLMIHSDY…HPLSELSRTI (138 aa)) is editing domain. Residues 133–157 (ELSRTITTEPEEESEDSEEEPSEPS) form a disordered region. Residues 141–154 (EPEEESEDSEEEPS) are compositionally biased toward acidic residues. Residues 200–495 (PHVRLMREKE…TDKGNKPSLP (296 aa)) are catalytic. The Zn(2+) site is built by cysteine 292, histidine 344, and histidine 466.

The protein belongs to the class-II aminoacyl-tRNA synthetase family. Homodimer. Zn(2+) is required as a cofactor.

The protein resides in the cytoplasm. It catalyses the reaction tRNA(Thr) + L-threonine + ATP = L-threonyl-tRNA(Thr) + AMP + diphosphate + H(+). Catalyzes the attachment of threonine to tRNA(Thr) in a two-step reaction: L-threonine is first activated by ATP to form Thr-AMP and then transferred to the acceptor end of tRNA(Thr). Also edits incorrectly charged L-seryl-tRNA(Thr). The sequence is that of Threonine--tRNA ligase from Methanosphaera stadtmanae (strain ATCC 43021 / DSM 3091 / JCM 11832 / MCB-3).